The primary structure comprises 460 residues: MQPPAFKELWIILRLAGPLIASQMAHMLMVFTDTVMMGKIGPEALAGGGLGAATYSFISFFCVGVMAAVGTLVSIRHGAGDSEGVTRLTQAGLWLAWGMALIAALLLWNLEPILLQLGQAEANVHMAAQFLITLPFALPGLLSFMALRGFTSALGRAGPVMTISVAGAVANFVLNYAMINQWLGLPNLGLMGIGLVTAMVTNCMALALAWHIKRHPAYAAYPISKGLSKLSRSHLKELWRLGLPIGGTYAVEVGLFTFAAFCMGAMGSTQMAAHQIALQTVSMAFMIPVGISYAVTMRIGQHYGAGNILMARTAGRLGIGFGGSVMLLFGIFFWLAPHWVIGLFLDLDDPAFAEIVVLAAKLLAIAAWFEFFDGTQTIAMGAIRGLKDARTTFLIGLGCYWLIAAPAAWLLGFYADGGASGVWWGLALGLFCSAVALTYAFEWKTARLLRKEAVGAAVPG.

12 helical membrane passes run 9–31 (LWII…LMVF), 51–73 (GAAT…GTLV), 93–115 (LWLA…PILL), 125–147 (HMAA…FMAL), 160–179 (VMTI…YAMI), 189–211 (GLMG…LAWH), 238–260 (LWRL…TFAA), 275–297 (QIAL…AVTM), 318–340 (GIGF…PHWV), 350–372 (PAFA…FEFF), 393–415 (FLIG…GFYA), and 419–441 (ASGV…TYAF).

Belongs to the multi antimicrobial extrusion (MATE) (TC 2.A.66.1) family.

Its subcellular location is the cell inner membrane. Multidrug efflux pump. This is Probable multidrug resistance protein NorM (norM) from Pseudomonas syringae pv. tomato (strain ATCC BAA-871 / DC3000).